Consider the following 96-residue polypeptide: Protein E7 (96 aa).

The segment at 1–37 (MIGKEVTLQDIVLELTEPQTVDLHCEEELPEQDTEVE) is E7 terminal domain. An LXCXE motif; interaction with host RB1 and TMEM173/STING motif is present at residues 23–27 (LHCEE). Residues 49 to 86 (CGGGCGTRLRLFVAATQFGIRGLQDLLLEEVVILCPDC) fold into a zinc finger. The Nuclear export signal signature appears at 68–76 (IRGLQDLLL).

The protein belongs to the papillomaviridae E7 protein family. Homodimer. Homooligomer. Interacts with host RB1; this interaction induces dissociation of RB1-E2F1 complex thereby disrupting RB1 activity. Interacts with host EP300; this interaction represses EP300 transcriptional activity. Interacts with protein E2; this interaction inhibits E7 oncogenic activity. Interacts with host TMEM173/STING; this interaction impairs the ability of TMEM173/STING to sense cytosolic DNA and promote the production of type I interferon (IFN-alpha and IFN-beta). Highly phosphorylated.

It localises to the host cytoplasm. The protein resides in the host nucleus. Functionally, plays a role in viral genome replication by driving entry of quiescent cells into the cell cycle. Stimulation of progression from G1 to S phase allows the virus to efficiently use the cellular DNA replicating machinery to achieve viral genome replication. E7 protein has both transforming and trans-activating activities. Induces the disassembly of the E2F1 transcription factor from RB1, with subsequent transcriptional activation of E2F1-regulated S-phase genes. Interferes with host histone deacetylation mediated by HDAC1 and HDAC2, leading to transcription activation. Also plays a role in the inhibition of both antiviral and antiproliferative functions of host interferon alpha. Interaction with host TMEM173/STING impairs the ability of TMEM173/STING to sense cytosolic DNA and promote the production of type I interferon (IFN-alpha and IFN-beta). This chain is Protein E7, found in Homo sapiens (Human).